A 285-amino-acid polypeptide reads, in one-letter code: Ribonuclease H1 (285 aa).

Residues Arg-72–Glu-122 form a disordered region. In terms of domain architecture, RNase H type-1 spans Met-135 to Lys-281. 4 residues coordinate Mg(2+): Asp-144, Glu-185, Asp-209, and Asp-273.

Belongs to the RNase H family. In terms of assembly, monomer. The cofactor is Mg(2+).

It is found in the cytoplasm. It carries out the reaction Endonucleolytic cleavage to 5'-phosphomonoester.. With respect to regulation, in the presence of magnesium, manganese is inhibitory. Functionally, endonuclease that specifically degrades the RNA of RNA-DNA hybrids. Plays a role in RNA polymerase II (RNAp II) transcription termination by degrading R-loop RNA-DNA hybrid formation at G-rich pause sites located downstream of the poly(A) site and behind the elongating RNAp II. In Rattus norvegicus (Rat), this protein is Ribonuclease H1 (Rnaseh1).